The following is a 122-amino-acid chain: Acyl carrier protein 1, mitochondrial (122 aa).

The transit peptide at 1–34 (MALRNAILRHLRVPVQTLGLNQSKIGFLGTIRSF) directs the protein to the mitochondrion. The Carrier domain maps to 44 to 119 (EAVVDRVLDV…LAIEYVYNHP (76 aa)). Ser-79 is modified (O-(pantetheine 4'-phosphoryl)serine).

Belongs to the acyl carrier protein (ACP) family. As to quaternary structure, complex I is composed of at least 49 different subunits. In terms of processing, 4'-phosphopantetheine is transferred from CoA to a specific serine of the apo-ACP-like protein.

Its subcellular location is the mitochondrion. The protein operates within lipid metabolism; fatty acid biosynthesis. Carrier of the growing fatty acid chain in fatty acid biosynthesis. May be involved in the synthesis of short and medium chain fatty acids. Accessory and non-catalytic subunit of the mitochondrial membrane respiratory chain NADH dehydrogenase (Complex I), which functions in the transfer of electrons from NADH to the respiratory chain. In Arabidopsis thaliana (Mouse-ear cress), this protein is Acyl carrier protein 1, mitochondrial (MTACP1).